Here is a 331-residue protein sequence, read N- to C-terminus: MTKANPFAALKWLSLAPALLLGGCDMTLFNPKGQVGMDERTLIITATLLMLIVVIPVIVMTLAFAWKYRASNTQAEYKPDWHHSNRIEAVVWLVPCVIIAILGWITWESTHKLDPYRPLDSEVKPVTIQAVSLDWKWLFIYPEQGIATVNEIAFPKDTPVNFQITSDSVMNSFFIPQLGSQIYSMAGMMTKLHLIANEEGVFDGISANYSGGGFSGMRFKAIATSEQGFQDWVAKVKAAPASLSIGTYPELVKPSENVPPTYFSSVSPELFGHILTKYEHHGDAKGAAHGEHAGAEHEAAMTGHDMQDMDMQAMQGMKDMKDMHMQPSTQE.

A signal peptide spans Met1–Gly23. The N-palmitoyl cysteine moiety is linked to residue Cys24. The S-diacylglycerol cysteine moiety is linked to residue Cys24. The Periplasmic portion of the chain corresponds to Cys24 to Thr41. Residues Leu42 to Leu62 traverse the membrane as a helical segment. At Ala63–Arg86 the chain is on the cytoplasmic side. The chain crosses the membrane as a helical span at residues Ile87–Trp107. At Glu108–Glu331 the chain is on the periplasmic side.

The protein belongs to the cytochrome c oxidase subunit 2 family. In terms of assembly, heterooctamer of two A chains, two B chains, two C chains and two D chains.

The protein localises to the cell inner membrane. Functionally, cytochrome bo(3) ubiquinol terminal oxidase is the component of the aerobic respiratory chain of E.coli that predominates when cells are grown at high aeration. Has proton pump activity across the membrane in addition to electron transfer, pumping 2 protons/electron. The chain is Cytochrome bo(3) ubiquinol oxidase subunit 2 (cyoA) from Pseudomonas aeruginosa (strain ATCC 15692 / DSM 22644 / CIP 104116 / JCM 14847 / LMG 12228 / 1C / PRS 101 / PAO1).